Consider the following 2430-residue polypeptide: Protein TASOR 2 (2430 aa).

Phosphoserine occurs at positions 19, 219, and 384. Disordered regions lie at residues 416–488 (LDRK…GETA) and 577–648 (RGTS…SQSS). Serine 685 carries the phosphoserine modification. Residues 704 to 727 (LLLQQKPPDDPVVKPKDRPPSARV) are disordered. Positions 710 to 723 (PPDDPVVKPKDRPP) are enriched in basic and acidic residues. 3 positions are modified to phosphoserine: serine 1025, serine 1087, and serine 1172. The segment at 1331–1360 (LTESREVSSADNVSVYPSVSEEPVENKERK) is disordered. Position 1541 is a phosphoserine (serine 1541). Residues 1700 to 1727 (EAELHKETTGPGTAGPQSNTTSSLKGER) form a disordered region. The segment covering 1714–1723 (GPQSNTTSSL) has biased composition (polar residues). Serine 1848 carries the phosphoserine modification. A Glycyl lysine isopeptide (Lys-Gly) (interchain with G-Cter in SUMO2) cross-link involves residue lysine 2007. 4 positions are modified to phosphoserine: serine 2009, serine 2037, serine 2062, and serine 2066. The disordered stretch occupies residues 2046–2069 (SDPRPQGQPRRGYTASSLDSSSSW).

It belongs to the TASOR family.

This Homo sapiens (Human) protein is Protein TASOR 2.